A 366-amino-acid chain; its full sequence is tRNA 2-selenouridine synthase (366 aa).

Positions 12-135 (FLNDVPMMDA…MRTFLLDTLH (124 aa)) constitute a Rhodanese domain. The active-site S-selanylcysteine intermediate is the Cys-95.

Belongs to the SelU family. Monomer.

It carries out the reaction 5-methylaminomethyl-2-thiouridine(34) in tRNA + selenophosphate + (2E)-geranyl diphosphate + H2O + H(+) = 5-methylaminomethyl-2-selenouridine(34) in tRNA + (2E)-thiogeraniol + phosphate + diphosphate. The enzyme catalyses 5-methylaminomethyl-2-thiouridine(34) in tRNA + (2E)-geranyl diphosphate = 5-methylaminomethyl-S-(2E)-geranyl-thiouridine(34) in tRNA + diphosphate. The catalysed reaction is 5-methylaminomethyl-S-(2E)-geranyl-thiouridine(34) in tRNA + selenophosphate + H(+) = 5-methylaminomethyl-2-(Se-phospho)selenouridine(34) in tRNA + (2E)-thiogeraniol. It catalyses the reaction 5-methylaminomethyl-2-(Se-phospho)selenouridine(34) in tRNA + H2O = 5-methylaminomethyl-2-selenouridine(34) in tRNA + phosphate. Involved in the post-transcriptional modification of the uridine at the wobble position (U34) of tRNA(Lys), tRNA(Glu) and tRNA(Gln). Catalyzes the conversion of 2-thiouridine (S2U-RNA) to 2-selenouridine (Se2U-RNA). Acts in a two-step process involving geranylation of 2-thiouridine (S2U) to S-geranyl-2-thiouridine (geS2U) and subsequent selenation of the latter derivative to 2-selenouridine (Se2U) in the tRNA chain. The polypeptide is tRNA 2-selenouridine synthase (Pseudomonas syringae pv. syringae (strain B728a)).